A 426-amino-acid polypeptide reads, in one-letter code: Histidine--tRNA ligase (426 aa).

This sequence belongs to the class-II aminoacyl-tRNA synthetase family.

It is found in the cytoplasm. The catalysed reaction is tRNA(His) + L-histidine + ATP = L-histidyl-tRNA(His) + AMP + diphosphate + H(+). The polypeptide is Histidine--tRNA ligase (Saccharolobus islandicus (strain L.S.2.15 / Lassen #1) (Sulfolobus islandicus)).